Here is a 302-residue protein sequence, read N- to C-terminus: Quinolinate synthase (302 aa).

Iminosuccinate-binding residues include His-24 and Ser-41. Cys-86 serves as a coordination point for [4Fe-4S] cluster. Residues Tyr-112 to Asn-114 and Ser-129 each bind iminosuccinate. Residue Cys-173 participates in [4Fe-4S] cluster binding. Residues His-199–Glu-201 and Thr-216 each bind iminosuccinate. Residue Cys-259 participates in [4Fe-4S] cluster binding.

This sequence belongs to the quinolinate synthase family. Type 2 subfamily. It depends on [4Fe-4S] cluster as a cofactor.

Its subcellular location is the cytoplasm. It catalyses the reaction iminosuccinate + dihydroxyacetone phosphate = quinolinate + phosphate + 2 H2O + H(+). It participates in cofactor biosynthesis; NAD(+) biosynthesis; quinolinate from iminoaspartate: step 1/1. Functionally, catalyzes the condensation of iminoaspartate with dihydroxyacetone phosphate to form quinolinate. The polypeptide is Quinolinate synthase (Thermococcus onnurineus (strain NA1)).